Here is a 183-residue protein sequence, read N- to C-terminus: Lipocalin (183 aa).

An N-terminal signal peptide occupies residues 1 to 20; the sequence is MKGLVLSFALVALSALCVYG. Cys83 and Cys179 are disulfide-bonded.

This sequence belongs to the calycin superfamily. Lipocalin family. In terms of assembly, monomer. As to expression, expressed mainly in choroid plexus. Much lower expression in other brain areas, and absent from liver.

It is found in the secreted. Its function is as follows. Might have a transport function across the blood brain barrier. Is supposed to have similar functions as a transthyretin which must have evolved after the stage of the amphibians in evolution. The sequence is that of Lipocalin from Rhinella marina (Cane toad).